A 350-amino-acid chain; its full sequence is Dihydroorotate dehydrogenase (quinone) (350 aa).

FMN contacts are provided by residues 67-71 and glycine 91; that span reads AGFDK. Lysine 71 lines the substrate pocket. 116 to 120 is a substrate binding site; that stretch reads NRMGL. FMN is bound by residues asparagine 144 and asparagine 177. Asparagine 177 serves as a coordination point for substrate. Cysteine 180 acts as the Nucleophile in catalysis. Asparagine 182 contacts substrate. 2 residues coordinate FMN: lysine 213 and threonine 241. 242 to 243 provides a ligand contact to substrate; the sequence is NT. Residues 245–265 form a disordered region; that stretch reads TERPASLRSPNAVETGGLSGK. FMN-binding positions include glycine 264, glycine 291, and 312 to 313; that span reads YT.

The protein belongs to the dihydroorotate dehydrogenase family. Type 2 subfamily. Monomer. FMN serves as cofactor.

Its subcellular location is the cell membrane. It catalyses the reaction (S)-dihydroorotate + a quinone = orotate + a quinol. Its pathway is pyrimidine metabolism; UMP biosynthesis via de novo pathway; orotate from (S)-dihydroorotate (quinone route): step 1/1. Its function is as follows. Catalyzes the conversion of dihydroorotate to orotate with quinone as electron acceptor. This chain is Dihydroorotate dehydrogenase (quinone) (pyrD), found in Haloarcula marismortui (strain ATCC 43049 / DSM 3752 / JCM 8966 / VKM B-1809) (Halobacterium marismortui).